A 194-amino-acid chain; its full sequence is Holliday junction branch migration complex subunit RuvA (194 aa).

The domain I stretch occupies residues methionine 1–alanine 64. A domain II region spans residues threonine 65–alanine 143. The interval alanine 144 to alanine 147 is flexible linker. The tract at residues alanine 147–lysine 194 is domain III.

The protein belongs to the RuvA family. As to quaternary structure, homotetramer. Forms an RuvA(8)-RuvB(12)-Holliday junction (HJ) complex. HJ DNA is sandwiched between 2 RuvA tetramers; dsDNA enters through RuvA and exits via RuvB. An RuvB hexamer assembles on each DNA strand where it exits the tetramer. Each RuvB hexamer is contacted by two RuvA subunits (via domain III) on 2 adjacent RuvB subunits; this complex drives branch migration. In the full resolvosome a probable DNA-RuvA(4)-RuvB(12)-RuvC(2) complex forms which resolves the HJ.

It is found in the cytoplasm. Functionally, the RuvA-RuvB-RuvC complex processes Holliday junction (HJ) DNA during genetic recombination and DNA repair, while the RuvA-RuvB complex plays an important role in the rescue of blocked DNA replication forks via replication fork reversal (RFR). RuvA specifically binds to HJ cruciform DNA, conferring on it an open structure. The RuvB hexamer acts as an ATP-dependent pump, pulling dsDNA into and through the RuvAB complex. HJ branch migration allows RuvC to scan DNA until it finds its consensus sequence, where it cleaves and resolves the cruciform DNA. The protein is Holliday junction branch migration complex subunit RuvA of Neisseria gonorrhoeae (strain ATCC 700825 / FA 1090).